We begin with the raw amino-acid sequence, 644 residues long: ATP-dependent zinc metalloprotease FtsH (644 aa).

The Cytoplasmic portion of the chain corresponds to 1 to 13 (MANNDNKHRRSMS). The chain crosses the membrane as a helical span at residues 14-34 (MLLYIAVAIFVYLLLSNTLLP). Topologically, residues 35 to 117 (GLLRQQIQTV…SIPDNSANML (83 aa)) are extracellular. Residues 118–138 (MYALIQYGIPLIIFLGIGFFI) form a helical membrane-spanning segment. Topologically, residues 139-644 (NRSLKRAMGD…DEGSSTPSEE (506 aa)) are cytoplasmic. 224–231 (GPPGTGKT) contributes to the ATP binding site. His445 is a Zn(2+) binding site. Glu446 is a catalytic residue. The Zn(2+) site is built by His449 and Asp522.

This sequence in the central section; belongs to the AAA ATPase family. The protein in the C-terminal section; belongs to the peptidase M41 family. As to quaternary structure, homohexamer. Zn(2+) is required as a cofactor.

It localises to the cell membrane. Acts as a processive, ATP-dependent zinc metallopeptidase for both cytoplasmic and membrane proteins. Plays a role in the quality control of integral membrane proteins. The protein is ATP-dependent zinc metalloprotease FtsH of Lancefieldella parvula (strain ATCC 33793 / DSM 20469 / CCUG 32760 / JCM 10300 / KCTC 3663 / VPI 0546 / 1246) (Atopobium parvulum).